The chain runs to 255 residues: Membrane protein insertase YidC 2 (255 aa).

Positions 1-20 (MKKKLGLLAMVVALMAITAG) are cleaved as a signal peptide. Residue C21 is the site of N-palmitoyl cysteine attachment. C21 is lipidated: S-diacylglycerol cysteine. Transmembrane regions (helical) follow at residues 59 to 79 (YGLAIVVTTLIIRFALLPLMI), 129 to 149 (LAGCLPIFVQMPILFAFYHAI), 160 to 180 (FLWFDLGQADPYYILPVVAAI), 202 to 222 (MMLWLMPIMILIFAINFPAAL), and 223 to 243 (SLYWVVGNIFGIAQMYLIKGP).

This sequence belongs to the OXA1/ALB3/YidC family. Type 2 subfamily.

Its subcellular location is the cell membrane. In terms of biological role, required for the insertion and/or proper folding and/or complex formation of integral membrane proteins into the membrane. Involved in integration of membrane proteins that insert both dependently and independently of the Sec translocase complex, as well as at least some lipoproteins. In Bacillus anthracis, this protein is Membrane protein insertase YidC 2.